We begin with the raw amino-acid sequence, 882 residues long: Valine--tRNA ligase (882 aa).

Residues 45–55 (PNVTGKLHLGH) carry the 'HIGH' region motif. The 'KMSKS' region motif lies at 519 to 523 (KMSKS). Lysine 522 lines the ATP pocket. The stretch at 808-882 (LADLLNVEEE…RIAEMKKIKS (75 aa)) forms a coiled coil.

It belongs to the class-I aminoacyl-tRNA synthetase family. ValS type 1 subfamily. As to quaternary structure, monomer.

The protein localises to the cytoplasm. It carries out the reaction tRNA(Val) + L-valine + ATP = L-valyl-tRNA(Val) + AMP + diphosphate. In terms of biological role, catalyzes the attachment of valine to tRNA(Val). As ValRS can inadvertently accommodate and process structurally similar amino acids such as threonine, to avoid such errors, it has a 'posttransfer' editing activity that hydrolyzes mischarged Thr-tRNA(Val) in a tRNA-dependent manner. This is Valine--tRNA ligase from Streptococcus pyogenes serotype M1.